Reading from the N-terminus, the 190-residue chain is GTP cyclohydrolase 1 1 (190 aa).

The protein belongs to the GTP cyclohydrolase I family. Homomer.

The catalysed reaction is GTP + H2O = 7,8-dihydroneopterin 3'-triphosphate + formate + H(+). It participates in cofactor biosynthesis; 7,8-dihydroneopterin triphosphate biosynthesis; 7,8-dihydroneopterin triphosphate from GTP: step 1/1. The chain is GTP cyclohydrolase 1 1 from Pseudomonas putida (strain ATCC 47054 / DSM 6125 / CFBP 8728 / NCIMB 11950 / KT2440).